The sequence spans 258 residues: PF03932 family protein CutC (258 aa).

This sequence belongs to the CutC family.

Its subcellular location is the cytoplasm. This is PF03932 family protein CutC from Mesorhizobium japonicum (strain LMG 29417 / CECT 9101 / MAFF 303099) (Mesorhizobium loti (strain MAFF 303099)).